Here is a 514-residue protein sequence, read N- to C-terminus: Monocarboxylate transporter 10 (514 aa).

The interval 1 to 64 (MVPSQEEPAA…TGNQEPPEPP (64 aa)) is disordered. Topologically, residues 1–65 (MVPSQEEPAA…GNQEPPEPPE (65 aa)) are cytoplasmic. A helical membrane pass occupies residues 66–86 (GGWGWLVMLAAMWCNGSVFGI). The Extracellular portion of the chain corresponds to 87–113 (QNAYGVLFVSMLETFGAKDDDNMAFKA). The chain crosses the membrane as a helical span at residues 114–134 (AWVGSLSMGMIFFCCPIVSVF). Topologically, residues 135-143 (TDMFGCRRT) are cytoplasmic. The chain crosses the membrane as a helical span at residues 144–164 (AVLGAAVGFVGLMSSSFVSSI). The Extracellular portion of the chain corresponds to 165–170 (EPLYFT). The chain crosses the membrane as a helical span at residues 171–191 (YGVVFACGCSFAYQPSLVILG). Residues 192–199 (HYFKKRLG) lie on the Cytoplasmic side of the membrane. The chain crosses the membrane as a helical span at residues 200–220 (LVNGIVTAGSSVFTILLPLLL). Topologically, residues 221 to 227 (GNLTSTV) are extracellular. The helical transmembrane segment at 228 to 248 (GLCYTLRILCIFMFVLFLAGF) threads the bilayer. The Cytoplasmic segment spans residues 249–290 (TYRPLVPSSKEKESEDSRSSFFSRRKLSPPKKIFNFALFKET). Ser-262 is subject to Phosphoserine. The helical transmembrane segment at 291–311 (AYAVWAAGIPLALFGYFVPYV) threads the bilayer. The Extracellular portion of the chain corresponds to 312–328 (HLMNHVKERFKDVNNKE). The helical transmembrane segment at 329–349 (VLFMCIGVTSGVGRLLFGRIA) threads the bilayer. Asp-350 is a topological domain (cytoplasmic). Residues 351–371 (YLPGVKKVYLQVLSFFFIGLT) traverse the membrane as a helical segment. The Extracellular portion of the chain corresponds to 372-395 (SMMIPLCSVFGALIALCLIMGLFD). A helical membrane pass occupies residues 396–416 (GCFISIMAPIAFELVGPQDAS). The Cytoplasmic portion of the chain corresponds to 417–418 (QA). A helical membrane pass occupies residues 419–439 (IGFLLGFMSIPMTVGPPVAGL). Residues 440 to 450 (LHDKLGSYDLA) are Extracellular-facing. A helical transmembrane segment spans residues 451 to 471 (FYLAGIPPFIGGAVLCLIPWI). At 472-514 (HSKKQREISKNTGGEKMEKMLANQSSLLSSSSGIFKKESDSII) the chain is on the cytoplasmic side. Phosphoserine is present on residues Ser-497, Ser-500, Ser-502, and Ser-503.

It belongs to the major facilitator superfamily. Monocarboxylate porter (TC 2.A.1.13) family. Not N-glycosylated. Strongly expressed in intestine, placenta and liver. In small intestine is detected in the basolateral membrane (at protein level).

The protein resides in the cell membrane. The protein localises to the basolateral cell membrane. The enzyme catalyses L-tryptophan(in) = L-tryptophan(out). It catalyses the reaction L-tyrosine(in) = L-tyrosine(out). The catalysed reaction is L-phenylalanine(in) = L-phenylalanine(out). It carries out the reaction 3,3',5-triiodo-L-thyronine(out) = 3,3',5-triiodo-L-thyronine(in). The enzyme catalyses L-thyroxine(out) = L-thyroxine(in). Sodium- and proton-independent thyroid hormones and aromatic acids transporter. Mediates both uptake and efflux of 3,5,3'-triiodothyronine (T3) and 3,5,3',5'-tetraiodothyronine (T4) with high affinity, suggesting a role in the homeostasis of thyroid hormone levels. Responsible for low affinity bidirectional transport of the aromatic amino acids, such as phenylalanine, tyrosine, tryptophan and L-3,4-dihydroxyphenylalanine (L-dopa). Plays an important role in homeostasis of aromatic amino acids. The chain is Monocarboxylate transporter 10 (Slc16a10) from Rattus norvegicus (Rat).